The sequence spans 141 residues: Hemoglobin subunit alpha-1/2 (141 aa).

In terms of domain architecture, Globin spans 1 to 141 (VLSPADKTNV…VSTVLTSKYR (141 aa)). Ser-3 is modified (phosphoserine). The residue at position 7 (Lys-7) is an N6-succinyllysine. The residue at position 8 (Thr-8) is a Phosphothreonine. Lys-11 is modified (N6-succinyllysine). At Lys-16 the chain carries N6-acetyllysine; alternate. Lys-16 carries the N6-succinyllysine; alternate modification. Tyr-24 is modified (phosphotyrosine). Ser-35 carries the phosphoserine modification. Lys-40 bears the N6-succinyllysine mark. Phosphoserine is present on Ser-49. Residue His-58 participates in O2 binding. His-87 is a binding site for heme b. Phosphoserine is present on Ser-102. Thr-108 is modified (phosphothreonine). Ser-124 carries the phosphoserine modification. 2 positions are modified to phosphothreonine: Thr-134 and Thr-137. At Ser-138 the chain carries Phosphoserine.

This sequence belongs to the globin family. Heterotetramer of two alpha chains and two beta chains. In terms of tissue distribution, red blood cells.

Involved in oxygen transport from the lung to the various peripheral tissues. The protein is Hemoglobin subunit alpha-1/2 of Mustela lutreola (European mink).